Reading from the N-terminus, the 121-residue chain is Ribulose bisphosphate carboxylase small subunit (121 aa).

It belongs to the RuBisCO small chain family. As to quaternary structure, heterohexadecamer of 8 large and 8 small subunits.

Functionally, ruBisCO catalyzes two reactions: the carboxylation of D-ribulose 1,5-bisphosphate, the primary event in carbon dioxide fixation, as well as the oxidative fragmentation of the pentose substrate. Both reactions occur simultaneously and in competition at the same active site. Although the small subunit is not catalytic it is essential for maximal activity. The protein is Ribulose bisphosphate carboxylase small subunit of Alvinoconcha hessleri symbiotic bacterium.